Consider the following 450-residue polypeptide: 3-phosphoshikimate 1-carboxyvinyltransferase (450 aa).

3-phosphoshikimate contacts are provided by Lys28, Ser29, and Arg33. Phosphoenolpyruvate is bound at residue Lys28. 2 residues coordinate phosphoenolpyruvate: Gly100 and Arg128. Residues Ser173, Gln175, Asp326, and Lys353 each contribute to the 3-phosphoshikimate site. A phosphoenolpyruvate-binding site is contributed by Gln175. Asp326 functions as the Proton acceptor in the catalytic mechanism. The phosphoenolpyruvate site is built by Arg357 and Arg402.

This sequence belongs to the EPSP synthase family. In terms of assembly, monomer.

It localises to the cytoplasm. The catalysed reaction is 3-phosphoshikimate + phosphoenolpyruvate = 5-O-(1-carboxyvinyl)-3-phosphoshikimate + phosphate. It functions in the pathway metabolic intermediate biosynthesis; chorismate biosynthesis; chorismate from D-erythrose 4-phosphate and phosphoenolpyruvate: step 6/7. Its function is as follows. Catalyzes the transfer of the enolpyruvyl moiety of phosphoenolpyruvate (PEP) to the 5-hydroxyl of shikimate-3-phosphate (S3P) to produce enolpyruvyl shikimate-3-phosphate and inorganic phosphate. This Brucella abortus (strain S19) protein is 3-phosphoshikimate 1-carboxyvinyltransferase.